The chain runs to 209 residues: Putative thymidylate synthase (209 aa).

The active site involves cysteine 137.

This sequence belongs to the thymidylate synthase family. Archaeal-type ThyA subfamily. Monomer.

The protein localises to the cytoplasm. Its pathway is pyrimidine metabolism; dTTP biosynthesis. In terms of biological role, may catalyze the biosynthesis of dTMP using an unknown cosubstrate. The sequence is that of Putative thymidylate synthase from Methanopyrus kandleri (strain AV19 / DSM 6324 / JCM 9639 / NBRC 100938).